The primary structure comprises 75 residues: uncharacterized protein (75 aa).

The first 26 residues, 1 to 26, serve as a signal peptide directing secretion; that stretch reads MQFLERHFSVLFPVLFFFSFYPISFA.

The protein resides in the secreted. This is an uncharacterized protein from Schizosaccharomyces pombe (strain 972 / ATCC 24843) (Fission yeast).